We begin with the raw amino-acid sequence, 1435 residues long: Trafficking protein particle complex subunit 8 (1435 aa).

3 positions are modified to phosphoserine: Ser-273, Ser-279, and Ser-309. Positions Gln-301–Ala-321 are disordered. The segment covering Leu-302 to Ile-312 has biased composition (polar residues).

It belongs to the TRS85 family. In terms of assembly, component of the multisubunit TRAPP (transport protein particle) complex, which includes TRAPPC2, TRAPPC2L, TRAPPC3, TRAPPC3L, TRAPPC4, TRAPPC5, TRAPPC8, TRAPPC9, TRAPPC10, TRAPPC11 and TRAPPC12. Interacts with TBC1D14. Interacts (via C-terminus) with TMEM131 (via C-terminus); the interaction is direct and is involved in collagen secretion.

Its subcellular location is the golgi apparatus. The protein localises to the cis-Golgi network. Its function is as follows. Plays a role in endoplasmic reticulum to Golgi apparatus trafficking at a very early stage. Maintains together with TBC1D14 the cycling pool of ATG9 required for initiation of autophagy. Involved in collagen secretion. The protein is Trafficking protein particle complex subunit 8 (TRAPPC8) of Homo sapiens (Human).